Consider the following 71-residue polypeptide: Augerpeptide-s7a (71 aa).

An N-terminal signal peptide occupies residues 1-20; it reads MSALKFVLICGLVLLLIETI. Residues 21–29 constitute a propeptide that is removed on maturation; the sequence is PGVSLNLMR. Cystine bridges form between C36–C48, C42–C65, and C47–C68.

Expressed by the venom duct.

It localises to the secreted. Functionally, elicits an uncoordinated twisting syndrome when injected into C.elegans, but has no effect on mice. The chain is Augerpeptide-s7a from Terebra subulata (Chocolate spotted auger).